The following is a 506-amino-acid chain: Anaerobic nitric oxide reductase transcription regulator NorR (506 aa).

The residue at position 57 (aspartate 57) is a 4-aspartylphosphate. In terms of domain architecture, Sigma-54 factor interaction spans 187-416 (MIGLSPAMTQ…LEHAIHRAVV (230 aa)). ATP-binding positions include 215-222 (GETGTGKE) and 278-287 (ADNGTLFLDE). Positions 481 to 500 (WAASARALETDVANLHRLAK) form a DNA-binding region, H-T-H motif.

It functions in the pathway nitrogen metabolism; nitric oxide reduction. Its function is as follows. Required for the expression of anaerobic nitric oxide (NO) reductase, acts as a transcriptional activator for at least the norVW operon. Activation also requires sigma-54. The sequence is that of Anaerobic nitric oxide reductase transcription regulator NorR from Salmonella gallinarum (strain 287/91 / NCTC 13346).